Here is a 239-residue protein sequence, read N- to C-terminus: Type III effector protein HopBA1 (239 aa).

The span at 1 to 20 shows a compositional bias: low complexity; the sequence is MLNRISSSSPTSYVSSGSSS. The segment at 1–31 is disordered; sequence MLNRISSSSPTSYVSSGSSSAGINPSINVRP.

It is found in the secreted. The protein localises to the host cell. In terms of biological role, virulence factor recognized by the A.thaliana disease resistance protein RBA1, which triggers plant cell death. HopBA1 enhances RBA1 self-association, which is necessary for ectopic autoactivation of host cell death. The chain is Type III effector protein HopBA1 from Pseudomonas syringae pv. aptata.